Consider the following 383-residue polypeptide: S-adenosylmethionine:tRNA ribosyltransferase-isomerase (383 aa).

This sequence belongs to the QueA family. In terms of assembly, monomer.

It localises to the cytoplasm. It catalyses the reaction 7-aminomethyl-7-carbaguanosine(34) in tRNA + S-adenosyl-L-methionine = epoxyqueuosine(34) in tRNA + adenine + L-methionine + 2 H(+). It functions in the pathway tRNA modification; tRNA-queuosine biosynthesis. In terms of biological role, transfers and isomerizes the ribose moiety from AdoMet to the 7-aminomethyl group of 7-deazaguanine (preQ1-tRNA) to give epoxyqueuosine (oQ-tRNA). This chain is S-adenosylmethionine:tRNA ribosyltransferase-isomerase, found in Rickettsia prowazekii (strain Madrid E).